The chain runs to 141 residues: Anthrone oxygenase ptaC (141 aa).

The N-terminal stretch at 1–19 (MMGLPLMAVPMLLDTGADP) is a signal peptide. Transmembrane regions (helical) follow at residues 33 to 53 (GVRT…WTII) and 64 to 84 (ILAV…YVLA).

It belongs to the anthrone oxygenase family.

Its subcellular location is the membrane. The protein operates within secondary metabolite biosynthesis. In terms of biological role, anthrone oxygenase; part of the gene cluster that mediates the biosynthesis of pestheic acid, a diphenyl ether which is a biosynthetic precursor of the unique chloropupukeananes. The biosynthesis initiates from condensation of acetate and malonate units catalyzed by the non-reducing PKS ptaA. As the ptaA protein is TE/CLC domain-deficient, hydrolysis and Claisen cyclization of the polyketide could be catalyzed by ptaB containing a beta-lactamase domain. The ptaB protein might hydrolyze the thioester bond between the ACP of ptaA and the intermediate to release atrochrysone carboxylic acid, which is spontaneously dehydrated to form endocrocin anthrone. Endocrocin anthrone is then converted to endocrocin, catalyzed by the anthrone oxygenase ptaC. Spontaneous decarboxylation of endocrocin occurs to generate emodin. An O-methyltransferase (ptaH or ptaI) could methylate emodin to form physcion. PtaJ could then catalyze the oxidative cleavage of physcion, and rotation of the intermediate could then afford desmethylisosulochrin. PtaF, a putative NADH-dependent oxidoreductase, might also participate in the oxidative cleavage step. Desmethylisosulochrin is then transformed by another O-methyltransferase (ptaH or ptaI) to form isosulochrin. Chlorination of isosulochrin by ptaM in the cyclohexadienone B ring then produces chloroisosulochrin. PtaE is responsible for the oxidative coupling reactions of both benzophenones isosulochrin and chloroisosulochrin to RES-1214-1 and pestheic acid respectively, regardless of chlorination. The chain is Anthrone oxygenase ptaC from Pestalotiopsis fici (strain W106-1 / CGMCC3.15140).